The chain runs to 384 residues: Putative RNA methyltransferase slr0064 (384 aa).

The THUMP domain occupies Leu-53–Ser-164.

Belongs to the methyltransferase superfamily.

The polypeptide is Putative RNA methyltransferase slr0064 (Synechocystis sp. (strain ATCC 27184 / PCC 6803 / Kazusa)).